We begin with the raw amino-acid sequence, 67 residues long: Large ribosomal subunit protein bL35 (67 aa).

Residues 1–16 (MPKMKTKSSAKKRFRV) are compositionally biased toward basic residues. A disordered region spans residues 1–24 (MPKMKTKSSAKKRFRVRPGGTVKR).

The protein belongs to the bacterial ribosomal protein bL35 family.

This is Large ribosomal subunit protein bL35 from Verminephrobacter eiseniae (strain EF01-2).